A 480-amino-acid chain; its full sequence is UDP-glucose 6-dehydrogenase 3 (480 aa).

NAD(+)-binding positions include 8 to 13 (GAGYVG), D33, R38, 86 to 90 (VNTPT), 127 to 128 (ST), and E161. Residues 157–161 (EFLAE), 216–223 (KLAANAFL), and 256–269 (RIGP…VGFG) each bind substrate. The Nucleophile role is filled by C272. 272 to 275 (CFQK) lines the NAD(+) pocket. 334 to 335 (FK) contributes to the substrate binding site. An NAD(+)-binding site is contributed by R342. Position 393 is a phosphoserine (S393). R447 contributes to the substrate binding site.

The protein belongs to the UDP-glucose/GDP-mannose dehydrogenase family.

The catalysed reaction is UDP-alpha-D-glucose + 2 NAD(+) + H2O = UDP-alpha-D-glucuronate + 2 NADH + 3 H(+). It functions in the pathway nucleotide-sugar biosynthesis; UDP-alpha-D-glucuronate biosynthesis; UDP-alpha-D-glucuronate from UDP-alpha-D-glucose: step 1/1. Involved in the biosynthesis of UDP-glucuronic acid (UDP-GlcA), providing nucleotide sugars for cell-wall polymers. This Oryza sativa subsp. japonica (Rice) protein is UDP-glucose 6-dehydrogenase 3 (UGD3).